The sequence spans 280 residues: Delta(3,5)-Delta(2,4)-dienoyl-CoA isomerase (280 aa).

Residue E154 is the Proton donor/acceptor of the active site. The short motif at 278–280 (HKL) is the Peroxisome targeting signal (PTS1) element.

Belongs to the enoyl-CoA hydratase/isomerase family.

The protein resides in the cytoplasm. The protein localises to the cytosol. It localises to the peroxisome. It carries out the reaction a (3E,5Z)-dienoyl-CoA = a (2E,4E)-(5,6-saturated)-dienoyl-CoA. Its pathway is lipid metabolism; fatty acid beta-oxidation. Peroxisomal di-isomerase that is involved in fatty acid metabolism enzyme by converting 3,5-dienoyl-CoAs to the corresponding 2,4-dienoyl-CoAs. Involved in fatty acid beta-oxidation, which is important for lipid droplets degradation and infectious growth. The protein is Delta(3,5)-Delta(2,4)-dienoyl-CoA isomerase of Pyricularia oryzae (strain 70-15 / ATCC MYA-4617 / FGSC 8958) (Rice blast fungus).